Here is a 512-residue protein sequence, read N- to C-terminus: Secreted triacylglycerol lipase LIP5 (512 aa).

The first 17 residues, 1-17 (MMYASLVHWLALAVALA), serve as a signal peptide directing secretion. Cys118 and Cys292 are joined by a disulfide. The active-site Nucleophile is Ser203. N-linked (GlcNAc...) asparagine glycosylation occurs at Asn316. Asp352 is a catalytic residue. Residue Asn361 is glycosylated (N-linked (GlcNAc...) asparagine). His386 is a catalytic residue. N-linked (GlcNAc...) asparagine glycosylation is present at Asn453. The segment at 480 to 512 (KGDISPGEGGDHTKESKKAAAKFKAEKKHGKHH) is disordered. Basic and acidic residues predominate over residues 488–497 (GGDHTKESKK). Basic residues predominate over residues 498–512 (AAAKFKAEKKHGKHH).

This sequence belongs to the AB hydrolase superfamily. Lipase family. Class Lip subfamily.

The protein localises to the secreted. It catalyses the reaction a triacylglycerol + H2O = a diacylglycerol + a fatty acid + H(+). The enzyme catalyses a monoacylglycerol + H2O = glycerol + a fatty acid + H(+). The catalysed reaction is a diacylglycerol + H2O = a monoacylglycerol + a fatty acid + H(+). Secreted lipase that hydrolyzes acylglycerol lipids such as triacylglycerols and consequently releases free fatty acid. Can hydrolyze 4-nitrophenyl palmitate to release 4-nitrophenol and palmitoic acid. Due to an absence of fatty acid synthase genes in Malassezia species, secretory lipases are essential for the yeast to generate free fatty acids from degradation of sebum and assimilate them as lipid sources for growth. Plays an essential role at the pathogen-host interface during disease progression. This chain is Secreted triacylglycerol lipase LIP5, found in Malassezia restricta (strain ATCC 96810 / NBRC 103918 / CBS 7877) (Seborrheic dermatitis infection agent).